The primary structure comprises 73 residues: Disintegrin barbourin (73 aa).

One can recognise a Disintegrin domain in the interval glutamate 1–glycine 73. Cystine bridges form between cysteine 6–cysteine 21, cysteine 8–cysteine 16, cysteine 15–cysteine 38, cysteine 29–cysteine 35, cysteine 34–cysteine 59, and cysteine 47–cysteine 66. The Cell attachment site; atypical (KGD) signature appears at lysine 51–aspartate 53.

It belongs to the venom metalloproteinase (M12B) family. P-II subfamily. P-IIa sub-subfamily. Monomer. As to expression, expressed by the venom gland.

The protein resides in the secreted. In terms of biological role, inhibitor of ligand binding to the integrins alpha-IIb/beta-3 (ITGA2B/ITGB3). Competition with fibrinogen for the RGD recognition sites on the alpha-IIb/beta-3 integrin results in the inhibition of platelet aggregation induced by ADP, thrombin, platelet-activating factor and collagen. The chain is Disintegrin barbourin from Sistrurus miliarius barbouri (Dusky pigmy rattlesnake).